The sequence spans 823 residues: ATP-dependent RNA helicase HrpA (823 aa).

The Helicase ATP-binding domain occupies Ile16–Glu179. Ser29 to Thr36 is a binding site for ATP. Positions Asp126–His129 match the DEAH box motif. Residues Lys203–Gly374 enclose the Helicase C-terminal domain.

Belongs to the DEAD box helicase family. DEAH subfamily.

The enzyme catalyses ATP + H2O = ADP + phosphate + H(+). In terms of biological role, has RNA-stimulated ATPase activity and RNA helicase activity. Involved in global regulation of gene expression. Could be involved in RNA processing and post-transcriptional gene regulation. Essential for both tick transmission and mouse infection. The chain is ATP-dependent RNA helicase HrpA from Borreliella burgdorferi (strain ATCC 35210 / DSM 4680 / CIP 102532 / B31) (Borrelia burgdorferi).